Consider the following 6930-residue polypeptide: MEGVPDPPKLKSMVVTTLKWCDPFANPNVTGWDIPIEEALEYAKQQLRTPEPQLVFVPYYLSHAPGISGDRVVITDSIWYATNFGWQPIRELAMDKDGVRYGRGGTHGVLLPMQDPSFIMGDIDIQIRKYGIGANSPPDVLPLWDGFSDPGPDVGPYLDFPDNCCPTKPKAKRGGDVYLSDQYGFDNNGILVEPVMKLLGVIKSDFTLEQLLAALGKYRTEDGYDLPDGYVKVAIKVGRKAVPVLKQSIFTVVGVTEQLVPGYYYPFSTSSVVEHTKPTRGGPVGKTVEAVMLSLYGTNNYNPATPVARLKCSYCDYYGWTPLKDIGTVNCLCGAEFQLTSSCVDAESAGVIKPGCVMLLDKSPGMRLIPGNRTYVSFGGAIWSPIGKVNGVTVWVPRAYSIVAGEHSGAVGSGDTVAINKELVEYLIEGIRVDADTLDNPTCATFIANLDCDTKAPVVHTVESLQGLCLANKIMLGDKPLPTDEFHPFIVGLAYHVQRACWYGALASRTFEAFRDFVRTEEERFAQFFGKVCAPINGCVYLAYTTGRVTLFSAYQVLNTAIAKSKDAFGGVAAIVVDMLKPILEWVLKKMSIAKGAWLPYAEGLLALFKAQFTVVKGKFQFLRASLNSKCHSLCDLLTTIMSKLLTSVKWAGCKVDALYTGTYYYFSRKGVLTEVQLCAKRLGLLLTPKQQKMEVEVLDGDFDAPVTLTDLELEECTGVLEEVFGASDVKLVKGTLVSLASKLFVRTEDGFLYRYVKSGGVLGKAFRLRGGGVSKVTFGDEEVHTIPNTVTVNFSYDVCEGLDAILDKVMAPFQVEEGTKLEDLACVVQKAVYERLSDLFSDCPAELRPINLEDFLTSECFVYSKDYEKILMPEMYFSLEDAVPVDDEMVDDIEDTVEQASDSDDQWLGDEGAEDCDNTIQDVDVATSMTTPCGYTKIAEHVYIKCADIVQEARNYSYAVLVNAANVNLHHGGGVAGALNRATNNAMQKESSEYIKANGSLQPGGHVLLSSHGLASHGILHVVGPDKRLGQDLALLDAVYAAYTGFDSVLTPLVSAGIFGFTVEESLCSLVKNVACTTYVVVYDRQLYERALATSFDVPGPQSSVQHVPAIDWAEAVEVQESIVDQVETPSLGAVDTVDSNADSGLNETARSPENVVGSVPDDVVADVESCVRDLVRQVVKKVKRDKRPPPIVPQQTVEQQPQEISSPGDCNTVLVDVVSMSFSAMVNFGKEKGLLIPVVIDYPAFLKVLKRFSPKEGLFSSNGYEFYGYSRDKPLHEVSKDLNSLGRPLIMIPFGFIVNGQTLAVSAVSMRGLTVPHTVVVPSESSVPLYRAYFNGVFSGDTTAVQDFVVDILLNGARDWDVLQTTCTVDRKVYKTICKRGNTYLCFDDTNLYAITGDVVLKFATVSKARAYLETKLCAPEPLIKVLTTVDGINYSTVLVSTAQSYRAQIGTVFCDGHDWSNKNPMPTDEGTHLYKQDNFSSAEVTAIREYYGVDDSNIIARAMSIRKTVQTWPYTVVDGRVLLAQRDSNCYLNVAISLLQDIDVSFSTPWVCRAYDALKGGNPLPMAEVLIALGKATPGVSDDAHMVLSAVLNHGTVTARRVMQTVCEHCGVSQMVFTGTDACTFYGSVVLDDLYAPVSVVCQCGRPAIRYVSEQKSPWLLMSCTPTQVPLDTSGIWKTAIVFRGPVTAGHYMYAVNGTLISVYDANTRRRTSDLKLPATDILYGPTSFTSDSKVETYYLDGVKRTTIDPDFSKYVKRGDYYFTTAPIEVVAAPKLVTSYDGFYLSSCQNPQLAESFNKAINATKTGPMKLLTMYPNVAGDVVAISDDNVVAHPYGSLHMGKPVLFVTRPNTWKKLVPLLSTVVVNTPNTYDVLAVDPLPVNNETSEEPISVKAPIPLYGLKATMVLNGTTYVPGNKGHLLCLKEFTLTDLQTFYVEGVQPFVLLKASHLSKVLGLRVSDSSLHVNHLSKGVVYAYAATRLTTRVTTSLLGGLVTRSVRKTADFVRSTNPGSKCVGLLCLFYQLFMRFWLLVKKPPIVKVSGIIAYNTGCGVTTCVLNYLRSRCGNISWSRLLKLLRYMLYIWFVWTCLTICGVWLSEPYAPSLVTRFKYFLGIVMPCDYVLVNETGTGWLHHLCMAGMDSLDYPALRMQQHRYGSPYNYTYILMLLEAFFAYLLYTPALPIVGILAVLHLIVLYLPIPLGNSWLVVFLYYIIRLVPFTSMLRMYIVIAFLWLCYKGFLHVRYGCNNVACLMCYKKNVAKRIECSTVVNGVKRMFYVNANGGTHFCTKHNWNCVSCDTYTVDSTFICRQVALDLSAQFKRPIIHTDEAYYEVTSVEVRNGYVYCYFESDGQRSYERFPMDAFTNVSKLHYSELKGAAPAFNVLVFDATNRIEENAVKTAAIYYAQLACKPILLVDKRMVGVVGDDATIARAMFEAYAQNYLLKYSIAMDKVKHLYSTALQQISSGMTVESVLKVFVGSTRAEAKDLESDVDTNDLVSCIRLCHQEGWEWTTDSWNNLVPTYIKQDTLSTLEVGQFMTANAKYVNANIAKGAAVNLIWRYADFIKLSESMRRQLKVAARKTGLNLLVTTSSLKADVPCMVTPFKIIGGHRRIVSWRRVLIHVFMLLVVLNPQWFTPWYIMRPIEYNVVDFKVIDNAVIRDITSADQCFANKFSAFENWYSNRYGSYVNSRGCPMVVGVVSDIVGSLVPGLPARFLRVGTTLLPLVNYGLGAVGSVCYTPHYAINYDVFDTSACVLAATCTLFSSASGERMPYCADAALIQNASRYDMLKPHVMYPFYEHSGYIRFPEVISAGVHIVRTMAMEYCKVGRCDVSEAGLCMSLQPRWVVNNAYFRQQSGVYCGTSAFDLFMNMLLPIFTPVGAVDITTSILMGALLAVVVSMSLYYLLRFRRAFGDYSGVIFTNILAFVLNVIVLCLEGPYPMLPSIYAMVFLYATCYFGSDIACMMHVSFLIMFAGVVPLWVTVLYIVVVLSRHILWFASLCTKRTVQVGDLAFHSFQDAALQTFMLDKEVFLRLKREISSDAYFKYLAMYNKYKYYSGPMDTAAYREAACSHLVMALEKYSNGGGDTIYQPPRCSVASAALQAGLTRMAHPSGLVEPCLVKVNYGSMTLNGIWLDNFVICPRHVMCSRDELANPDYPRLSMRAANYDFHVSQNGHNIRVIGHTMEGSLLKLTVDVNNPKTPAYSFIRVSTGQAMSLLACYDGLPTGVYTCTLRSNGTMRASFLCGSCGSPGFVMNGKEVQFCYLHQLELPNGTHTGTDFSGVFYGPFEDKQVPQLAAPDCTITVNVLAWLYAAVLSGENWFLTKSSISPAEFNNCAVKYMCQSVTSESLQVLQPLAAKTGISVERMLSALKVLLSAGFCGRTIMGSCSLEDEHTPYDIGRQMLGVKLQGKFQSMFRWTLQWFAIIFVLTILILLQLAQWTFVGALPFTLLLPLIGFVAVCVGFVSLLIKHKHTYLTVYLLPVAMVTAYYNFQYTPEGVQGYLLSLYNYVNPGRIDVIGTDLLTMLIISVACTLLSVRMVRTDAYSRIWYVCTAVGWLYNCWTGSADTVAISYLTFMVSVFTNYTGVACASLYAAQFMVWVLKFLDPTILLLYGRFRCVLVCYLLVGYLCTCYFGVFNLINRLFRCTLGNYEYVVSSQELRYMNSHGLLPPTNSWQALMLNIKLAGIGGIPIYRVSTIQSNMTDLKCTSVVLLSVLQQLRVESSSKLWALCVKLHNEILASNSPTEAFEAFVSLLSVLLSLPGAINLDELCSSILENNSVLQAVASEFSNLSSYVDYENAQKAYDTAVATGAPASTVNALKKAMNVAKSVLDKDVATTRKLERMSELAMTAMYKQARAEDRRSKVTAAMQTMLFNMIRRLDSDALSNILNNARNGVVPLGVIPRTAANKLLLVVPDFSVYTATITMPTLTYAGSAWDVMQVADADGKTVNATDITRENSVNLAWPLVVTAQRQQATSPVKLQNNELMPQTVKRMNVVAGVSQTACVTDAVAYYNATKEGRHVMAILADTDGLAFAKVEKSTGDGFVILELEPPCKFMVDTPKGPALKYLYFTKGLKNLCRGTVLGTLACTVRLHAGSATEVASNSSILSLCSFSVDPEATYKDYLDNGGSPIGNCVKMLTPHTGTGLAITAKPDANIDQESFGGASCCLYCRCHIEHPGASGVCKYKGKFVQIPLVGVNDPIGFCIRNVVCAVCNMWQGYGCPCSSLREINLQARDECFLNRVRGTSGVARLVPLGSGVQPDIVLRAFDICNTKVAGFGLHLKNNCCRYQELDADGTQLDSYFVVKRHTESNYLLEQRCYEKLKDCGVVARHDFFKFNIEGVMTPHVSRERLTKYTMADLVYSLRHFDNNNCDTLKEILVLRGCCTADYFDRKDWYDPVENPDIIRVYHNLGETVRKAVLSAVKMADSMVEQGLIGVLTLDNQDLNGQWYDFGDFIEGPAGAGVAVMDTYYSLAMPVYTMTNMLAAECHVDGDFSKPKRVWDICKYDYTQFKYSLFSKYFKYWDMQYHPNCVACADDRCILHCANFNILFSMVLPNTSFGPLVQKIYVDGVPFVVSTGYHYRELGVVMNQDIRQHAQRLSLRELLVYAADPAMHVAASNALADKRTVCMSVAAMTTGVTFQTVKPGQFNEDFYNFAVKCGFFKEGSTISFKHFFYAQDGNAAISDYDYYRYNLPTMCDIKQLLFSLEVVDKYFDCYDGGCLQASQVVVANYDKSAGFPFNKFGKARLYYESLSYADQDELFAYTKRNVLPTITQMNLKYAISAKNRARTVAGVSIASTMTNRQFHQKMLKSIAAARGASVVIGTTKFYGGWNRMLRTLCEGVENPHLMGWDYPKCDRAMPNLLRIFASLILARKHATCCNASERFYRLANECAQVLSEMVLCGGGFYVKPGGTSSGDSTTAYANSVFNICQAVSANLNTFLSIDGNKIYTTYVQELQRRLYLGIYRSNTVDNELVLDYYNYLRKHFSMMILSDDGVVCYNADYAQKGYVADIQGFKELLYFQNNVFMSESKCWVEPDITKGPHEFCSQHTMLVDMKGEQVYLPYPDPSRILGAGCFVDDLLKTDGTLMMERYVSLAIDAYPLTKHPDPEYQNVFWCYLQYIKKLHEELTGHLLDTYSVMLASDNASKYWEVEFYENMYMESATLQSVGTCVVCNSQTSLRCGGCIRRPFLCCKCCYDHVVSTTHKLVLSVTPYVCNNPSCDVADVTQLYLGGMSYYCRDHRPPISFPLCANGQVFGLYKNICTGSPDVADFNSLATCDWSNSKDYVLANTATERLKLFAAETLRATEENAKQAYASAVVKEVLSDRELVLSWETGKTRPPLNRNYVFTGFHITKNSKVQLGEYIFEKGDYGDVVNYRSSTTYKLQVGDYFVLTSHSVQPLSSPTLLPQERYTKLVGLYPAMNVPESFASNVVHYQRVGMSRYTTVQGPPGTGKSHLSIGLALYYPSAKIVYTACSHAAVDALCEKAHKNLPINRCSRIVPAKARVECFSKFKVNDVGAQYVFSTINALPETTADILVVDEVSMCTNYDLSMINARVRAKHIVYVGDPAQLPAPRTLLTKGTLAPEHFNSVCRLMVAVGPDIFLATCYRCPKEIVDTVSALVYDKKLKANKVTTGECYKCYYKGSVTHDSSSAINKPQLGLVKEFLIKNPKWQSAVFISPYNSQNSVARRMLGLQTQTVDSSQGSEFDYVIYCQTSDTAHALNVNRFNVAITRAKKGILCVMSDSTLYESLEFTPLDVNDYVKPKMQSEVTVGLFKDCAKAEPLGPAYAPTFVSVNDKFKLNESLCVHFDTTELQMPYNRLISKMGFKFDLNIPGYSKLFITREQAIREVRGWVGFDVEGAHACGPNIGTNLPLQIGFSTGVNFVVTPSGYIDTESGSRLANVVSKAPPGDQFKHLIPLMRKGEPWSVVRKRIVEMLCDTLDGVSDTVTFVTWAHGFELTTLHYFAKVGPERKCFMCPRRATLFSSVYGAYSCWSHHRHIGGADFVYNPFLVDVQQWGYVGNLQVNHDNVCDVHKGAHVASCDAIMTRCLAIHDCFCGEVNWDVEYPIIANELAINRACRSVQRVVLKAAVKALHIETIYDIGNPKAIKVYGVNVNNWNFYDTNPVVEGVKQLHYVYDVHRDQFKDGLAMFWNCNVDCYPHNALVCRFDTRVLSKLNLAGCNGGSLYVNQHAFHTDAFNKNAFVNLKPLPFFYYSDTACENATGVSTNYVSEVDYVPLKSNVCITRCNLGGAVCKKHADEYRNFLESYNTMVSAGFTLWVDKTFDVFNLWSTFVKLQSLENVAYNVLKSGHFTAVAGELPVAILNDRLYIKEDGADKLLFTNNTCLPTNVAFELWAKRSVNVVPEVKLLRNLGVTCTYNLVIWDYESNAPLVPNTVGICTYTDLTKLDDQVVLVDGRQLDAYSKFCQLKNAIYFSPSKPKCVCTRGPTHASINGVVVEAPDRGTAFWYAMRKDGAFVQPTDGYFTQSRTVDDFQPRTQLEIDFLDLEQSCFLDKYDLHDLGLEHIVYGQFDGTIGGLHLLIGAVRRKRTAHLVMETVLGTDTVTSYAVIDQPTASSKQVCSVVDIILDDFIALIKAQDRSVVSKVVQCCLDFKVFRFMLWCKGGKISTFYPQLQAKQDWKPGYSMPALYKVQNAVLEPCLLHNYGQAARLPSGTLMNVAKYTQLCQYLNTCSLAVPAKMRVMHFGAGSDKGVCPGTAVLKQWLPADAYLVDNDLCYCASDADSTYVGSCETFFSVNKWDFIFSDMYDARTKNTSGDNTSKEGFFTYLTGFIRSKLALGGSIAIKITEHSWSADLYAIMGHFNWWTCFCTSVNSSSSEAFLIGVNYIGVGALLDGWQMHANYVFWRNSTVMQLSSYSLYDLQRFPLRLKGTPVMSLKEDQLNELVLNLIRAGRLIVRDAVDIGVRGVACSGV.

The 122-residue stretch at 10–131 folds into the CoV Nsp1 globular domain; the sequence is LKSMVVTTLK…DIDIQIRKYG (122 aa). In terms of domain architecture, BetaCoV Nsp1 C-terminal spans 149–175; the sequence is DPGPDVGPYLDFPDNCCPTKPKAKRGG. The CoV Nsp2 N-terminal domain maps to 177-431; the sequence is VYLSDQYGFD…ELVEYLIEGI (255 aa). Residues cysteine 312, cysteine 315, cysteine 331, and cysteine 333 each coordinate Zn(2+). Positions 312–333 are C4; that stretch reads CSYCDYYGWTPLKDIGTVNCLC. The region spanning 432–644 is the CoV Nsp2 middle domain; it reads RVDADTLDNP…CDLLTTIMSK (213 aa). Residues 646–772 form the CoV Nsp2 C-terminal domain; sequence LTSVKWAGCK…LGKAFRLRGG (127 aa). The Ubiquitin-like 1 domain maps to 775 to 885; that stretch reads SKVTFGDEEV…MYFSLEDAVP (111 aa). The 168-residue stretch at 930–1097 folds into the Macro 1 domain; sequence MTTPCGYTKI…LYERALATSF (168 aa). The interval 1188 to 1207 is disordered; that stretch reads KRPPPIVPQQTVEQQPQEIS. Residues 1195–1206 show a composition bias toward low complexity; it reads PQQTVEQQPQEI. A Macro 2 domain is found at 1216–1340; it reads LVDVVSMSFS…LYRAYFNGVF (125 aa). Residues 1345–1417 form the DPUP domain; that stretch reads TAVQDFVVDI…VSKARAYLET (73 aa). Positions 1423-1478 constitute a Ubiquitin-like 2 domain; that stretch reads EPLIKVLTTVDGINYSTVLVSTAQSYRAQIGTVFCDGHDWSNKNPMPTDEGTHLYK. The Peptidase C16 domain occupies 1492–1757; it reads EYYGVDDSNI…RTTIDPDFSK (266 aa). The active-site For PL-PRO activity is the cysteine 1533. Positions 1610, 1613, 1645, and 1647 each coordinate Zn(2+). The C4-type zinc finger occupies 1610–1647; that stretch reads CEHCGVSQMVFTGTDACTFYGSVVLDDLYAPVSVVCQC. Residues histidine 1694 and aspartate 1708 each act as for PL-PRO activity in the active site. One can recognise a Nucleic acid-binding domain in the interval 1770-1870; the sequence is PIEVVAAPKL…PLLSTVVVNT (101 aa). The G2M domain occupies 1883-2012; it reads PVNNETSEEP…KTADFVRSTN (130 aa). A run of 3 helical transmembrane segments spans residues 2015–2035, 2040–2060, and 2081–2101; these read SKCV…WLLV, IVKV…TCVL, and YMLY…WLSE. The segment at 2015 to 2238 is HD1; it reads SKCVGLLCLF…IVIAFLWLCY (224 aa). A 3Ecto domain is found at 2105-2162; sequence PSLVTRFKYFLGIVMPCDYVLVNETGTGWLHHLCMAGMDSLDYPALRMQQHRYGSPYN. An intrachain disulfide couples cysteine 2121 to cysteine 2138. The next 3 membrane-spanning stretches (helical) occupy residues 2162–2182, 2183–2203, and 2218–2238; these read NYTY…YTPA, LPIV…PIPL, and LVPF…WLCY. Residues 2239–2329 form a Y1 region; the sequence is KGFLHVRYGC…QFKRPIIHTD (91 aa). Positions 2239–2610 constitute a CoV Nsp3 Y domain; the sequence is KGFLHVRYGC…MVTPFKIIGG (372 aa). Zn(2+)-binding residues include histidine 2243, cysteine 2248, cysteine 2253, cysteine 2256, cysteine 2289, histidine 2292, cysteine 2296, and cysteine 2299. Residues 2243–2256 are ZF1; that stretch reads HVRYGCNNVACLMC. Positions 2289–2299 are ZF2; that stretch reads CTKHNWNCVSC. Residues 2330–2425 are Y2; sequence EAYYEVTSVE…LVDKRMVGVV (96 aa). Positions 2330–2610 are coV-Y; it reads EAYYEVTSVE…MVTPFKIIGG (281 aa). The segment at 2426-2509 is Y3; that stretch reads GDDATIARAM…SCIRLCHQEG (84 aa). Positions 2510 to 2610 are Y4; sequence WEWTTDSWNN…MVTPFKIIGG (101 aa). 7 helical membrane-spanning segments follow: residues 2621–2641, 2719–2739, 2865–2885, 2887–2907, 2916–2936, 2946–2966, and 2970–2990; these read LIHV…PWYI, VGTT…SVCY, AFDL…AVDI, TSIL…YYLL, YSGV…VLCL, IYAM…ACMM, and FLIM…IVVV. An HD2 region spans residues 2621–2990; sequence LIHVFMLLVV…WVTVLYIVVV (370 aa). In terms of domain architecture, Nsp4C spans 3007-3103; that stretch reads VQVGDLAFHS…RCSVASAALQ (97 aa). One can recognise a Peptidase C30 domain in the interval 3104 to 3409; the sequence is AGLTRMAHPS…GRQMLGVKLQ (306 aa). Catalysis depends on for 3CL-PRO activity residues histidine 3144 and cysteine 3248. Helical transmembrane passes span 3423-3443, 3449-3469, 3474-3494, 3517-3537, 3569-3589, 3592-3612, and 3620-3640; these read FAII…WTFV, TLLL…SLLI, TYLT…NFQY, VIGT…LLSV, VAIS…GVAC, LYAA…ILLL, and LVCY…FNLI. The HD3 stretch occupies residues 3423–3640; sequence FAIIFVLTIL…TCYFGVFNLI (218 aa). The 83-residue stretch at 3700 to 3782 folds into the RdRp Nsp7 cofactor domain; the sequence is SNMTDLKCTS…SILENNSVLQ (83 aa). The 200-residue stretch at 3783–3982 folds into the RdRp Nsp8 cofactor domain; the sequence is AVASEFSNLS…QQATSPVKLQ (200 aa). The region spanning 3983–4094 is the Nsp9 ssRNA-binding domain; that stretch reads NNELMPQTVK…GTLACTVRLH (112 aa). One can recognise an ExoN/MTase coactivator domain in the interval 4095–4233; it reads AGSATEVASN…CSSLREINLQ (139 aa). Zn(2+) is bound by residues cysteine 4168, cysteine 4171, histidine 4177, cysteine 4184, cysteine 4211, cysteine 4214, cysteine 4222, and cysteine 4224. Zinc fingers lie at residues 4168–4184 and 4211–4224; these read CLYC…SGVC and CAVC…GCPC. One can recognise a NiRAN domain in the interval 4239–4494; that stretch reads FLNRVRGTSG…AAECHVDGDF (256 aa). Residues asparagine 4442 and aspartate 4451 each contribute to the Mn(2+) site. Positions 4499-4597 constitute a Nsp12 Interface domain; sequence RVWDICKYDY…MNQDIRQHAQ (99 aa). Zn(2+)-binding residues include histidine 4528, cysteine 4534, cysteine 4539, cysteine 4543, and cysteine 4720. Residues 4598 to 5165 enclose the Nsp12 RNA-dependent RNA polymerase domain; it reads RLSLRELLVY…NMYMESATLQ (568 aa). A rdRp Fingers N-ter region spans residues 4600-4814; sequence SLRELLVYAA…HQKMLKSIAA (215 aa). Residues 4815 to 4853 are rdRp Palm N-ter; sequence ARGASVVIGTTKFYGGWNRMLRTLCEGVENPHLMGWDYP. A RdRp catalytic domain is found at 4845 to 5007; it reads PHLMGWDYPK…CYNADYAQKG (163 aa). The segment at 4854 to 4912 is rdRp Fingers C-ter; the sequence is KCDRAMPNLLRIFASLILARKHATCCNASERFYRLANECAQVLSEMVLCGGGFYVKPGG. Zn(2+) contacts are provided by histidine 4875, cysteine 4878, and cysteine 4879. The rdRp Palm C-ter stretch occupies residues 4913 to 5048; that stretch reads TSSGDSTTAY…TKGPHEFCSQ (136 aa). Active-site residues include serine 4992, aspartate 4993, and aspartate 4994. The segment at 5049–5165 is rdRp Thumb; the sequence is HTMLVDMKGE…NMYMESATLQ (117 aa). In terms of domain architecture, CV ZBD spans 5166–5278; sequence SVGTCVVCNS…ADFNSLATCD (113 aa). The Zn(2+) site is built by cysteine 5170, cysteine 5173, cysteine 5181, cysteine 5184, cysteine 5191, cysteine 5194, histidine 5198, histidine 5204, cysteine 5215, cysteine 5220, cysteine 5237, and histidine 5240. The region spanning 5412–5603 is the (+)RNA virus helicase ATP-binding domain; it reads TKLVGLYPAM…MVAVGPDIFL (192 aa). 5447 to 5454 serves as a coordination point for ATP; it reads GPPGTGKS. The (+)RNA virus helicase C-terminal domain maps to 5604–5778; it reads ATCYRCPKEI…VTVGLFKDCA (175 aa). An ExoN domain is found at 5838–6056; it reads LFITREQAIR…RCLAIHDCFC (219 aa). Active-site residues include aspartate 5856, glutamate 5858, and glutamate 5957. Zn(2+) contacts are provided by cysteine 5973, cysteine 5976, cysteine 5992, histidine 5995, histidine 6026, cysteine 6030, and histidine 6033. Catalysis depends on residues histidine 6037 and aspartate 6042. Cysteine 6048 contributes to the Zn(2+) binding site. The N7-MTase domain maps to 6065-6296; it reads YPIIANELAI…NLWSTFVKLQ (232 aa). 6100 to 6106 provides a ligand contact to S-adenosyl-L-methionine; that stretch reads DIGNPKA. The gpppA-binding stretch occupies residues 6180–6194; it reads CNGGSLYVNQHAFHT. Residues cysteine 6218, cysteine 6242, cysteine 6253, and histidine 6256 each coordinate Zn(2+). A Nsp15 N-terminal oligomerization domain is found at 6297-6357; it reads SLENVAYNVL…NVAFELWAKR (61 aa). The region spanning 6358-6476 is the AV-Nsp11N/CoV-Nsp15M domain; it reads SVNVVPEVKL…YAMRKDGAFV (119 aa). In terms of domain architecture, NendoU spans 6493–6630; it reads QPRTQLEIDF…KGGKISTFYP (138 aa). Active-site residues include histidine 6523, histidine 6537, lysine 6576, lysine 6679, aspartate 6763, lysine 6803, and glutamate 6836. Residues 6635 to 6928 enclose the Nidovirus-type SAM-dependent 2'-O-MTase domain; that stretch reads KQDWKPGYSM…DIGVRGVACS (294 aa).

Belongs to the coronaviruses polyprotein 1ab family. As to quaternary structure, interacts with host PHB and PHB2. In terms of assembly, interacts with papain-like protease nsp3 and non-structural protein 6. Monomer. Homodimer. Only the homodimer shows catalytic activity. As to quaternary structure, interacts with nsp8 and nsp12 to form the replication-transcription complex (RTC): nsp12, nsp7, two subunits of nsp8, and up to two subunits of nsp13. In terms of assembly, interacts with nsp7, nsp13 and nsp12 to form the replication-transcription complex (RTC): nsp12, nsp7, two subunits of nsp8, and up to two subunits of nsp13. Interacts with nsp12. As to quaternary structure, interacts with proofreading exoribonuclease nsp14 and 2'-O-methyltransferase nsp16; these interactions enhance nsp14 and nsp16 enzymatic activities. In terms of assembly, interacts with nsp7 and nsp8 to form the replication-transcription complex (RTC): nsp12, nsp7, two subunits of nsp8, and up to two subunits of nsp13. Interacts with nsp9. Interacts with nsp8 to form the replication-transcription complex (RTC): nsp12, nsp7, two subunits of nsp8, and up to two subunits of nsp13. It depends on Mn(2+) as a cofactor. Mg(2+) serves as cofactor. Post-translationally, specific enzymatic cleavages in vivo by its own proteases yield mature proteins. 3CL-PRO and PL-PRO proteinases are autocatalytically processed.

The protein resides in the host membrane. It localises to the host cytoplasm. Its subcellular location is the host perinuclear region. The protein localises to the host endoplasmic reticulum-Golgi intermediate compartment. The enzyme catalyses RNA(n) + a ribonucleoside 5'-triphosphate = RNA(n+1) + diphosphate. It catalyses the reaction ATP + H2O = ADP + phosphate + H(+). The catalysed reaction is Thiol-dependent hydrolysis of ester, thioester, amide, peptide and isopeptide bonds formed by the C-terminal Gly of ubiquitin (a 76-residue protein attached to proteins as an intracellular targeting signal).. It carries out the reaction a 5'-end (N(7)-methyl 5'-triphosphoguanosine)-ribonucleoside in mRNA + S-adenosyl-L-methionine = a 5'-end (N(7)-methyl 5'-triphosphoguanosine)-(2'-O-methyl-ribonucleoside) in mRNA + S-adenosyl-L-homocysteine + H(+). The enzyme catalyses uridylyl-uridylyl-ribonucleotide-RNA = a 3'-end uridylyl-2',3'-cyclophospho-uridine-RNA + a 5'-end dephospho-ribonucleoside-RNA. It catalyses the reaction a 5'-end diphospho-ribonucleoside in mRNA + GTP + H(+) = a 5'-end (5'-triphosphoguanosine)-ribonucleoside in mRNA + diphosphate. The catalysed reaction is a 5'-end (5'-triphosphoguanosine)-ribonucleoside in mRNA + S-adenosyl-L-methionine = a 5'-end (N(7)-methyl 5'-triphosphoguanosine)-ribonucleoside in mRNA + S-adenosyl-L-homocysteine. Functionally, the replicase polyprotein of coronaviruses is a multifunctional protein: it contains the activities necessary for the transcription of negative stranded RNA, leader RNA, subgenomic mRNAs and progeny virion RNA as well as proteinases responsible for the cleavage of the polyprotein into functional products. Inhibits host translation by interacting with the 40S ribosomal subunit. The nsp1-40S ribosome complex further induces an endonucleolytic cleavage near the 5'UTR of host mRNAs, targeting them for degradation. Viral mRNAs are not susceptible to nsp1-mediated endonucleolytic RNA cleavage thanks to the presence of a 5'-end leader sequence and are therefore protected from degradation. By suppressing host gene expression, nsp1 facilitates efficient viral gene expression in infected cells and evasion from host immune response. Its function is as follows. May play a role in the modulation of host cell survival signaling pathway by interacting with host PHB and PHB2. Indeed, these two proteins play a role in maintaining the functional integrity of the mitochondria and protecting cells from various stresses. In terms of biological role, responsible for the cleavages located at the N-terminus of the replicase polyprotein. In addition, PL-PRO possesses a deubiquitinating/deISGylating activity and processes both 'Lys-48'- and 'Lys-63'-linked polyubiquitin chains from cellular substrates. Participates together with nsp4 in the assembly of virally-induced cytoplasmic double-membrane vesicles necessary for viral replication. Antagonizes innate immune induction of type I interferon by blocking the phosphorylation, dimerization and subsequent nuclear translocation of host IRF3. Also prevents host NF-kappa-B signaling. Functionally, participates in the assembly of virally-induced cytoplasmic double-membrane vesicles necessary for viral replication. Cleaves the C-terminus of replicase polyprotein at 11 sites. Recognizes substrates containing the core sequence [ILMVF]-Q-|-[SGACN]. Also able to bind an ADP-ribose-1''-phosphate (ADRP). Its function is as follows. Plays a role in the initial induction of autophagosomes from host endoplasmic reticulum. Later, limits the expansion of these phagosomes that are no longer able to deliver viral components to lysosomes. In terms of biological role, forms a hexadecamer with nsp8 (8 subunits of each) that may participate in viral replication by acting as a primase. Alternatively, may synthesize substantially longer products than oligonucleotide primers. Functionally, forms a hexadecamer with nsp7 (8 subunits of each) that may participate in viral replication by acting as a primase. Alternatively, may synthesize substantially longer products than oligonucleotide primers. Forms a primer, NSP9-pU, which is utilized by the polymerase for the initiation of RNA chains. Interacts with ribosome signal recognition particle RNA (SRP). Together with NSP8, suppress protein integration into the cell membrane, thereby disrupting host immune defenses. Its function is as follows. Plays a pivotal role in viral transcription by stimulating both nsp14 3'-5' exoribonuclease and nsp16 2'-O-methyltransferase activities. Therefore plays an essential role in viral mRNAs cap methylation. In terms of biological role, RNA-directed RNA polymerase that catalyzes the transcription of viral genomic and subgenomic RNAs. Acts in complex with nsp7 and nsp8 to transcribe both the minus and positive strands of genomic RNA. The kinase-like NiRAN domain of NSP12 attaches one or more nucleotides to the amino terminus of NSP9, forming a covalent RNA-protein intermediate that serves as transcription/replication primer. Subgenomic RNAs (sgRNAs) are formed by discontinuous transcription: The polymerase has the ability to pause at transcription-regulating sequences (TRS) and jump to the leader TRS, resulting in a major deletion. This creates a series of subgenomic RNAs that are replicated, transcribed and translated. In addition, Nsp12 is a subunit of the viral RNA capping enzyme that catalyzes the RNA guanylyltransferase reaction for genomic and sub-genomic RNAs. Subsequently, the NiRAN domain transfers RNA to GDP, and forms the core cap structure GpppA-RNA. Functionally, multi-functional protein with a zinc-binding domain in N-terminus displaying RNA and DNA duplex-unwinding activities with 5' to 3' polarity. Activity of helicase is dependent on magnesium. Plays a role in viral RNA synthesis through two distinct activities. The N7-guanine methyltransferase activity plays a role in the formation of the cap structure GpppA-RNA. The proofreading exoribonuclease reduces the sensitivity of the virus to RNA mutagens during replication. This activity acts on both ssRNA and dsRNA in a 3'-5' direction. Its function is as follows. Plays a role in viral transcription/replication and prevents the simultaneous activation of host cell dsRNA sensors, such as MDA5/IFIH1, OAS, and PKR. Acts by degrading the 5'-polyuridines generated during replication of the poly(A) region of viral genomic and subgenomic RNAs. Catalyzes a two-step reaction in which a 2'3'-cyclic phosphate (2'3'-cP) is first generated by 2'-O transesterification, which is then hydrolyzed to a 3'-phosphate (3'-P). If not degraded, poly(U) RNA would hybridize with poly(A) RNA tails and activate host dsRNA sensors. In terms of biological role, methyltransferase that mediates mRNA cap 2'-O-ribose methylation to the 5'-cap structure of viral mRNAs. N7-methyl guanosine cap is a prerequisite for binding of nsp16. Therefore plays an essential role in viral mRNAs cap methylation which is essential to evade immune system. The protein is Replicase polyprotein 1ab (rep) of Bat coronavirus HKU9 (BtCoV).